Reading from the N-terminus, the 730-residue chain is Cyclin-T2 (730 aa).

The interval 1–300 (MASGRGASSR…SVTGVPTNPS (300 aa)) is interaction with MDFIC and MDFI. The Cyclin N-terminal domain maps to 12–147 (FFTREQLENT…IMLQTLGFEI (136 aa)). An interaction with POLR2A region spans residues 250-300 (RLKKIRNWRANQAARKPKVDGQVSETPLLGSSLVQNSILVDSVTGVPTNPS). Composition is skewed to polar residues over residues 341–350 (TSYGLSSHQE) and 360–389 (TEQL…SISL). The disordered stretch occupies residues 341 to 430 (TSYGLSSHQE…GPISTTPGII (90 aa)). Residues 398-412 (DKISDHSSVKQEYTH) show a composition bias toward basic and acidic residues. Residue lysine 407 forms a Glycyl lysine isopeptide (Lys-Gly) (interchain with G-Cter in SUMO2) linkage. Serine 480 is modified (phosphoserine). The tract at residues 497–652 (DKKEKSGSLK…SSSSSSSSVK (156 aa)) is disordered. Basic and acidic residues-rich tracts occupy residues 517–543 (SASK…EGSG) and 552–565 (ISRD…EHPS). Over residues 566–578 (SRHHTSSHKHSHS) the composition is skewed to basic residues. The segment covering 579-588 (HSGSSSGGSK) has biased composition (low complexity). Serine 601 carries the phosphoserine modification. Low complexity-rich tracts occupy residues 606 to 616 (SSDGISSSSSS) and 637 to 652 (SSKS…SSVK).

This sequence belongs to the cyclin family. Cyclin C subfamily. Interacts with CDK9 to form P-TEFb. Interacts with POLR2A (via the C-terminal domain (CTD)); mediates transcriptional activity. Interacts with HEXIM1; mediates formation of a tripartite complex with KPNA2. Interacts with HEXIM2. Interacts with PKN1; enhances MYOD1-dependent transcription. P-TEFB complex interacts with RB1; promotes phosphorylation of RB1. P-TEFB complex interacts with MYOD1; promotes the transcriptional activity of MYOD1 through its CDK9-mediated phosphorylation. Interacts with MDFI and MDFIC. Interacts with MON1B; down-regulates CCNT2-mediated activation of viral promoters during herpes simplex virus 1/HHV-1 infection. As to quaternary structure, (Microbial infection) Interacts with HIV-2 and SIV Tat. Does not bind efficiently to the transactivation domain of the HIV-1 Tat. In terms of tissue distribution, ubiquitously expressed.

It localises to the cytoplasm. It is found in the perinuclear region. Its subcellular location is the nucleus. Its function is as follows. Regulatory subunit of the cyclin-dependent kinase pair (CDK9/cyclin T) complex, also called positive transcription elongation factor B (P-TEFB), which is proposed to facilitate the transition from abortive to production elongation by phosphorylating the CTD (carboxy-terminal domain) of the large subunit of RNA polymerase II (RNAP II). The activity of this complex is regulated by binding with 7SK snRNA. Plays a role during muscle differentiation; P-TEFB complex interacts with MYOD1; this tripartite complex promotes the transcriptional activity of MYOD1 through its CDK9-mediated phosphorylation and binds the chromatin of promoters and enhancers of muscle-specific genes; this event correlates with hyperphosphorylation of the CTD domain of RNA pol II. In addition, enhances MYOD1-dependent transcription through interaction with PKN1. Involved in early embryo development. (Microbial infection) Promotes transcriptional activation of early and late herpes simplex virus 1/HHV-1 promoters. The protein is Cyclin-T2 of Homo sapiens (Human).